The following is an 869-amino-acid chain: 1-phosphatidylinositol 4,5-bisphosphate phosphodiesterase 1 (869 aa).

Residues 269-304 form the EF-hand domain; it reads VSTGQLLEFFQLADINHNGLLNYFEFEKFIKILKNR. Aspartate 282, asparagine 284, asparagine 286, and glutamate 293 together coordinate Ca(2+). Residues 382-520 enclose the PI-PLC X-box domain; that stretch reads YSKPLNHYFI…LKHKILLKSK (139 aa). Active-site residues include histidine 395 and histidine 439. The substrate site is built by lysine 518 and lysine 520. The tract at residues 546–571 is disordered; sequence ANEQELRMKDDSTNSSSATNSSSMQR. The span at 558–568 shows a compositional bias: low complexity; it reads TNSSSATNSSS. Residues 590 to 709 enclose the PI-PLC Y-box domain; the sequence is ISGIHGIKFR…SGYVLKPKKL (120 aa). Substrate-binding residues include serine 614 and arginine 643. Positions 713 to 862 constitute a C2 domain; sequence VTKAKMIPLI…EGEQYIFCTL (150 aa).

As to quaternary structure, interacts with SGD1. Ca(2+) serves as cofactor.

It catalyses the reaction a 1,2-diacyl-sn-glycero-3-phospho-(1D-myo-inositol-4,5-bisphosphate) + H2O = 1D-myo-inositol 1,4,5-trisphosphate + a 1,2-diacyl-sn-glycerol + H(+). The production of the second messenger molecules diacylglycerol (DAG) and inositol 1,4,5-trisphosphate (IP3) is mediated by activated phosphatidylinositol-specific phospholipase C enzymes. Required for cell growth, osmoresistance and expression of GPD1. This chain is 1-phosphatidylinositol 4,5-bisphosphate phosphodiesterase 1 (PLC1), found in Saccharomyces cerevisiae (strain ATCC 204508 / S288c) (Baker's yeast).